The chain runs to 819 residues: Leucine--tRNA ligase (819 aa).

The 'HIGH' region motif lies at P42 to H52. Positions K576–S580 match the 'KMSKS' region motif. K579 contacts ATP.

The protein belongs to the class-I aminoacyl-tRNA synthetase family.

It is found in the cytoplasm. The enzyme catalyses tRNA(Leu) + L-leucine + ATP = L-leucyl-tRNA(Leu) + AMP + diphosphate. The protein is Leucine--tRNA ligase of Nitrosococcus oceani (strain ATCC 19707 / BCRC 17464 / JCM 30415 / NCIMB 11848 / C-107).